The following is a 274-amino-acid chain: 16S rRNA (guanine(1405)-N(7))-methyltransferase (274 aa).

S-adenosyl-L-methionine is bound by residues 102–108 (HISTRER), A133, D156, 182–183 (DL), L198, and Q207.

It belongs to the methyltransferase superfamily. Aminoglycoside resistance family.

The catalysed reaction is guanosine(1405) in 16S rRNA + S-adenosyl-L-methionine = N(7)-methylguanosine(1405) in 16S rRNA + S-adenosyl-L-homocysteine. Specifically methylates the N(7) position of guanine 1405 in 16S rRNA. Confers resistance to various aminoglycosides, including gentamicin, kanamycin and sisomicin. This is 16S rRNA (guanine(1405)-N(7))-methyltransferase (sgm) from Micromonospora zionensis.